A 209-amino-acid chain; its full sequence is Eukaryotic translation initiation factor 4E (209 aa).

MRNA-binding positions include 51-52 (WH), 97-98 (WE), and 153-158 (RKQAYR).

The protein belongs to the eukaryotic initiation factor 4E family. In terms of assembly, eIF4F is a multi-subunit complex, the composition of which varies with external and internal environmental conditions. It is composed of at least eIF4A, eIF4E and eIF4G. eIF4E is also known to interact with other partners.

Recognizes and binds the 7-methylguanosine-containing mRNA cap during an early step in the initiation of protein synthesis and facilitates ribosome binding by inducing the unwinding of the mRNAs secondary structures. The protein is Eukaryotic translation initiation factor 4E (TIF45) of Candida albicans (strain SC5314 / ATCC MYA-2876) (Yeast).